Reading from the N-terminus, the 460-residue chain is Cysteine--tRNA ligase (460 aa).

Residue cysteine 28 participates in Zn(2+) binding. The 'HIGH' region motif lies at 30–40; the sequence is NTVYDFCHIGH. Zn(2+) is bound by residues cysteine 209, histidine 234, and glutamate 238. Positions 266–270 match the 'KMSKS' region motif; sequence KMSKS. Lysine 269 is an ATP binding site.

The protein belongs to the class-I aminoacyl-tRNA synthetase family. In terms of assembly, monomer. It depends on Zn(2+) as a cofactor.

The protein resides in the cytoplasm. It catalyses the reaction tRNA(Cys) + L-cysteine + ATP = L-cysteinyl-tRNA(Cys) + AMP + diphosphate. The polypeptide is Cysteine--tRNA ligase (Marinomonas sp. (strain MWYL1)).